Consider the following 209-residue polypeptide: Large ribosomal subunit protein uL3 (209 aa).

The interval 144–165 is disordered; it reads GSMGAASDPSRTFKNKKMPGHM.

It belongs to the universal ribosomal protein uL3 family. As to quaternary structure, part of the 50S ribosomal subunit. Forms a cluster with proteins L14 and L19.

One of the primary rRNA binding proteins, it binds directly near the 3'-end of the 23S rRNA, where it nucleates assembly of the 50S subunit. This chain is Large ribosomal subunit protein uL3, found in Clostridium novyi (strain NT).